Reading from the N-terminus, the 187-residue chain is Phosphatidylethanolamine-binding protein 1 (187 aa).

Phosphoserine occurs at positions 6 and 13. Phosphothreonine is present on T42. S52, S54, S98, and S153 each carry phosphoserine. Residues 93–134 (KGNDISSGTVLSDYVGSGPPKGTGLHRYVWLVYEQDRPLKCD) are interaction with RAF1.

The protein belongs to the phosphatidylethanolamine-binding protein family. As to quaternary structure, has a tendency to form dimers by disulfide cross-linking. Interacts with RAF1 and this interaction is enhanced if RAF1 is phosphorylated on residues 'Ser-338', 'Ser-339', 'Tyr-340' and 'Tyr-341'. Interacts with ALOX15; in response to IL13/interleukin-13, prevents the interaction of PEBP1 with RAF1 to activate the ERK signaling cascade.

It localises to the cytoplasm. Binds ATP, opioids and phosphatidylethanolamine. Has lower affinity for phosphatidylinositol and phosphatidylcholine. Serine protease inhibitor which inhibits thrombin, neuropsin and chymotrypsin but not trypsin, tissue type plasminogen activator and elastase. Inhibits the kinase activity of RAF1 by inhibiting its activation and by dissociating the RAF1/MEK complex and acting as a competitive inhibitor of MEK phosphorylation. Functionally, HCNP may be involved in the function of the presynaptic cholinergic neurons of the central nervous system. HCNP increases the production of choline acetyltransferase but not acetylcholinesterase. Seems to be mediated by a specific receptor. The sequence is that of Phosphatidylethanolamine-binding protein 1 (PEBP1) from Pongo abelii (Sumatran orangutan).